Reading from the N-terminus, the 320-residue chain is Tetraspanin-32 (320 aa).

The next 4 membrane-spanning stretches (helical) occupy residues 14-34, 60-80, 90-110, and 203-223; these read MLVTCFFILLLGLSVATMVTL, WAFSAGLSLVGLLTLGAVLSA, LMAGGFLCFSLAFCAQVQVVF, and SIGLALTVSALLFSSFLWFAI.

Belongs to the tetraspanin (TM4SF) family. As to expression, expressed ubiquitously at low levels. High levels of expression are confined to hematopoietic tissues including peripheral blood leukocytes, thymus and spleen.

The protein localises to the membrane. This Homo sapiens (Human) protein is Tetraspanin-32 (TSPAN32).